Reading from the N-terminus, the 429-residue chain is Enolase (429 aa).

(2R)-2-phosphoglycerate is bound at residue Q164. The active-site Proton donor is E206. 3 residues coordinate Mg(2+): D243, E286, and D313. 4 residues coordinate (2R)-2-phosphoglycerate: K338, R367, S368, and K389. K338 functions as the Proton acceptor in the catalytic mechanism.

The protein belongs to the enolase family. It depends on Mg(2+) as a cofactor.

The protein localises to the cytoplasm. It is found in the secreted. The protein resides in the cell surface. It carries out the reaction (2R)-2-phosphoglycerate = phosphoenolpyruvate + H2O. Its pathway is carbohydrate degradation; glycolysis; pyruvate from D-glyceraldehyde 3-phosphate: step 4/5. Its function is as follows. Catalyzes the reversible conversion of 2-phosphoglycerate (2-PG) into phosphoenolpyruvate (PEP). It is essential for the degradation of carbohydrates via glycolysis. This is Enolase from Thermotoga sp. (strain RQ2).